The primary structure comprises 429 residues: Septin-11 (429 aa).

The residue at position 2 (Ala2) is an N-acetylalanine. A Phosphoserine modification is found at Ser9. A Septin-type G domain is found at 38–304 (QGFCFNILCV…ELYRRCKLEE (267 aa)). Positions 48-55 (GETGIGKS) are G1 motif. GTP is bound by residues 48-55 (GETGIGKS), Gly103, 184-192 (KADTIAKNE), Gly238, and Arg253. The tract at residues 100–103 (DTVG) is G3 motif. Residues 183–186 (AKAD) are G4 motif. Residues 320–415 (QETYEAKRNE…QSQAQQSGAQ (96 aa)) adopt a coiled-coil conformation. The segment at 398 to 429 (KKAAAQLLQSQAQQSGAQQTKKDKDKKNASFT) is disordered. A compositionally biased stretch (low complexity) spans 401–416 (AAQLLQSQAQQSGAQQ). The segment covering 417–429 (TKKDKDKKNASFT) has biased composition (basic and acidic residues).

This sequence belongs to the TRAFAC class TrmE-Era-EngA-EngB-Septin-like GTPase superfamily. Septin GTPase family. As to quaternary structure, septins polymerize into heterooligomeric protein complexes that form filaments, and can associate with cellular membranes, actin filaments and microtubules. Forms homooligomers. GTPase activity is required for filament formation. Interacts with SEPTIN7, SEPTIN9 and SEPTIN12. As to expression, widely expressed, except in leukocytes.

The protein resides in the cytoplasm. Its subcellular location is the cytoskeleton. The protein localises to the synapse. It is found in the cell projection. It localises to the dendritic spine. The protein resides in the axon. In terms of biological role, filament-forming cytoskeletal GTPase. May play a role in cytokinesis (Potential). May play a role in the cytoarchitecture of neurons, including dendritic arborization and dendritic spines, and in GABAergic synaptic connectivity. During Listeria monocytogenes infection, not required for the bacterial entry process, but restricts its efficacy. In Homo sapiens (Human), this protein is Septin-11.